The primary structure comprises 149 residues: Lipoprotein signal peptidase (149 aa).

The next 3 membrane-spanning stretches (helical) occupy residues 24 to 44 (SHIA…LTNL), 57 to 77 (KMWF…YLLW), and 81 to 101 (GKWL…GNFI). Active-site residues include D111 and D127. Residues 122–142 (IFNFADSCLTVGVIFILIGVL) form a helical membrane-spanning segment.

This sequence belongs to the peptidase A8 family.

It localises to the cell membrane. The enzyme catalyses Release of signal peptides from bacterial membrane prolipoproteins. Hydrolyzes -Xaa-Yaa-Zaa-|-(S,diacylglyceryl)Cys-, in which Xaa is hydrophobic (preferably Leu), and Yaa (Ala or Ser) and Zaa (Gly or Ala) have small, neutral side chains.. Its pathway is protein modification; lipoprotein biosynthesis (signal peptide cleavage). In terms of biological role, this protein specifically catalyzes the removal of signal peptides from prolipoproteins. The sequence is that of Lipoprotein signal peptidase from Lactiplantibacillus plantarum (strain ATCC BAA-793 / NCIMB 8826 / WCFS1) (Lactobacillus plantarum).